The chain runs to 171 residues: Zinc finger A20 and AN1 domain-containing stress-associated protein 8 (171 aa).

The A20-type zinc-finger motif lies at 11–45 (PEGPILCINNCGFFGSAATMNMCSKCHKEMIMKQE). Residues Cys17, Cys21, Cys33, Cys36, Cys112, Cys115, Cys126, Cys128, Cys133, His136, His142, and Cys144 each contribute to the Zn(2+) site. The segment at 106–152 (REGPNRCSTCRKRVGLTGFNCRCGNLYCAMHRYSDKHDCQFDYRTAA) adopts an AN1-type zinc-finger fold.

Its function is as follows. May be involved in environmental stress response. This is Zinc finger A20 and AN1 domain-containing stress-associated protein 8 (SAP8) from Oryza sativa subsp. indica (Rice).